We begin with the raw amino-acid sequence, 64 residues long: Prokaryotic ubiquitin-like protein Pup (64 aa).

Residues 1 to 32 are disordered; sequence MNAKQTQIMGGGGRDEDNAEDSAQASGQVQIN. The ARC ATPase binding stretch occupies residues 20 to 58; it reads EDSAQASGQVQINTEGVDSLLDEIDGLLENNAEEFVRSY. Residues 21-32 show a composition bias toward polar residues; it reads DSAQASGQVQIN. Glutamate 64 is covalently cross-linked (Isoglutamyl lysine isopeptide (Glu-Lys) (interchain with K-? in acceptor proteins)).

It belongs to the prokaryotic ubiquitin-like protein family. As to quaternary structure, strongly interacts with the proteasome-associated ATPase ARC through a hydrophobic interface; the interacting region of Pup lies in its C-terminal half. There is one Pup binding site per ARC hexamer ring.

The protein operates within protein degradation; proteasomal Pup-dependent pathway. Its function is as follows. Protein modifier that is covalently attached to lysine residues of substrate proteins, thereby targeting them for proteasomal degradation. The tagging system is termed pupylation. This chain is Prokaryotic ubiquitin-like protein Pup, found in Corynebacterium glutamicum (strain R).